The sequence spans 396 residues: MAKAKFERNKPHLNIGTIGHVDHGKTTLTAAISKVLADKYPDVNEQRDFGAIDSAPEEKQRGITINIAHIEYQTDKRHYAHVDAPGHADYVKNMITGAAQMDGAILVVAATDGPMAQTREHVLLARQVGVPYLLVALNKSDMVDDEELLDLVEMEVRELLSDQGFDGDNAPVVRVSALKALEGDAQWVKSVEDLMEAVDENVPDPVRDTDKPFLMPIEDVFTITGRGTVVTGRAERGTLPINSEVEIVGIRPVQKTTVTGIEMFHKQMDEAMAGENCGLLLRGLKRDDVERGQVVCKPGSITPHTDFEANVYILSKEEGGRHNPFYSNYRPQFYFRTTDVTGVITLPEGTEMVMPGDNTEMTVELIQPIAMEEGLGFAIREGGRTVGSGRVTKIIK.

Residues 10-206 enclose the tr-type G domain; it reads KPHLNIGTIG…AVDENVPDPV (197 aa). Residues 19 to 26 form a G1 region; sequence GHVDHGKT. A GTP-binding site is contributed by 19-26; that stretch reads GHVDHGKT. Threonine 26 is a Mg(2+) binding site. Positions 62–66 are G2; that stretch reads GITIN. Residues 83–86 are G3; that stretch reads DAPG. Residues 83–87 and 138–141 contribute to the GTP site; these read DAPGH and NKSD. Positions 138–141 are G4; that stretch reads NKSD. Positions 176–178 are G5; that stretch reads SAL.

The protein belongs to the TRAFAC class translation factor GTPase superfamily. Classic translation factor GTPase family. EF-Tu/EF-1A subfamily. In terms of assembly, monomer.

It localises to the cytoplasm. It catalyses the reaction GTP + H2O = GDP + phosphate + H(+). Functionally, GTP hydrolase that promotes the GTP-dependent binding of aminoacyl-tRNA to the A-site of ribosomes during protein biosynthesis. This is Elongation factor Tu from Kocuria rhizophila (strain ATCC 9341 / DSM 348 / NBRC 103217 / DC2201).